Reading from the N-terminus, the 297-residue chain is N-acetylmannosamine kinase (297 aa).

Residues 5 to 12 (ALDIGGTK) and 132 to 139 (GVGGGIIL) contribute to the ATP site. Residues His-156, Cys-166, Cys-168, and Cys-173 each coordinate Zn(2+).

It belongs to the ROK (NagC/XylR) family. NanK subfamily. In terms of assembly, homodimer.

It catalyses the reaction an N-acyl-D-mannosamine + ATP = an N-acyl-D-mannosamine 6-phosphate + ADP + H(+). It participates in amino-sugar metabolism; N-acetylneuraminate degradation; D-fructose 6-phosphate from N-acetylneuraminate: step 2/5. Catalyzes the phosphorylation of N-acetylmannosamine (ManNAc) to ManNAc-6-P. This is N-acetylmannosamine kinase from Pasteurella multocida (strain Pm70).